The chain runs to 186 residues: Elongation factor P (186 aa).

It belongs to the elongation factor P family.

It is found in the cytoplasm. It participates in protein biosynthesis; polypeptide chain elongation. Involved in peptide bond synthesis. Stimulates efficient translation and peptide-bond synthesis on native or reconstituted 70S ribosomes in vitro. Probably functions indirectly by altering the affinity of the ribosome for aminoacyl-tRNA, thus increasing their reactivity as acceptors for peptidyl transferase. In Shewanella loihica (strain ATCC BAA-1088 / PV-4), this protein is Elongation factor P.